The following is a 695-amino-acid chain: MQSVEARYVDLDKIRNIGIMAHIDAGKTTTTERILYYTGRKHFIGDVDEGTATTDWMPQEKERGITIQSAATTCFWKGYRINIIDTPGHVDFTAEVERALRVLDGAIAVFDATAGVEPQSETVWRQADKYNVPRIAFMNKMDKVGADFYMAVETLVTKLRANPIPIQMPIGSEKDFQGVIDLIKMKAIYWTSEDGSVYEEREIPDELKEEAELRREEMLEKVAELDETILEKYLEGEEITEEEIKKVLRKATIENRAVPVLCGAAKMNKGIQPLLDAVIDYLPSPLDLPPVKGWRLSDGEVVYRKPDENEPFTALVFKVQVDPYIGKLVYFRVYSGRLEKGSYVYNSTKGQRERISRIVFMHADKREEVDYVRPGDIAAGVGLKASQTGDTLCDEKEPTVLEKIDFPEPVISLAIEPATKSDEEKLVKALLALSEEDPTLQVKVDKETGETIISGMGELHLEIIVDRLKREFGVNVRVGQPQVAYRETIKKAAEAEGKYIRQTGGRGQYGHVILRIEPIPEEEGKNFEFIDKTVGGVIPKEFMPAIEAGIKEAMMSGPLAGYPVVRIRAIVLDGSYHEVDSSEMAFKIAASLAFKEAMKKAQPVLLEPIMKLEITTPEEYMGNIIADLNSRRAKVEALETRGHLKVIVAKVPLSETFGYATTLRSLSQGRASYIMQFSHYQEVPEKIAEKIIKVV.

The tr-type G domain maps to 12–286 (DKIRNIGIMA…AVIDYLPSPL (275 aa)). GTP-binding positions include 21–28 (AHIDAGKT), 85–89 (DTPGH), and 139–142 (NKMD).

Belongs to the TRAFAC class translation factor GTPase superfamily. Classic translation factor GTPase family. EF-G/EF-2 subfamily.

It localises to the cytoplasm. In terms of biological role, catalyzes the GTP-dependent ribosomal translocation step during translation elongation. During this step, the ribosome changes from the pre-translocational (PRE) to the post-translocational (POST) state as the newly formed A-site-bound peptidyl-tRNA and P-site-bound deacylated tRNA move to the P and E sites, respectively. Catalyzes the coordinated movement of the two tRNA molecules, the mRNA and conformational changes in the ribosome. The polypeptide is Elongation factor G (Thermotoga neapolitana (strain ATCC 49049 / DSM 4359 / NBRC 107923 / NS-E)).